The chain runs to 192 residues: Imidazole glycerol phosphate synthase subunit HisH (192 aa).

A Glutamine amidotransferase type-1 domain is found at 1 to 192 (MIVIVDYGLG…QAIQGGFIND (192 aa)). Cys77 acts as the Nucleophile in catalysis. Catalysis depends on residues His169 and Glu171.

Heterodimer of HisH and HisF.

The protein resides in the cytoplasm. It catalyses the reaction 5-[(5-phospho-1-deoxy-D-ribulos-1-ylimino)methylamino]-1-(5-phospho-beta-D-ribosyl)imidazole-4-carboxamide + L-glutamine = D-erythro-1-(imidazol-4-yl)glycerol 3-phosphate + 5-amino-1-(5-phospho-beta-D-ribosyl)imidazole-4-carboxamide + L-glutamate + H(+). It carries out the reaction L-glutamine + H2O = L-glutamate + NH4(+). The protein operates within amino-acid biosynthesis; L-histidine biosynthesis; L-histidine from 5-phospho-alpha-D-ribose 1-diphosphate: step 5/9. In terms of biological role, IGPS catalyzes the conversion of PRFAR and glutamine to IGP, AICAR and glutamate. The HisH subunit catalyzes the hydrolysis of glutamine to glutamate and ammonia as part of the synthesis of IGP and AICAR. The resulting ammonia molecule is channeled to the active site of HisF. In Staphylococcus aureus (strain bovine RF122 / ET3-1), this protein is Imidazole glycerol phosphate synthase subunit HisH.